A 540-amino-acid chain; its full sequence is Berberine bridge enzyme-like 16 (540 aa).

The signal sequence occupies residues 1–24 (MKFWSRPLTFLIIIIYLIIQQVNS). An intrachain disulfide couples C38 to C101. A glycan (N-linked (GlcNAc...) asparagine) is linked at N59. In terms of domain architecture, FAD-binding PCMH-type spans 79 to 254 (STRKPEVIVA…LAWKIKLVRV (176 aa)). The segment at residues 116–178 (HDYEGFSYTS…KVHAFPAGVC (63 aa)) is a cross-link (6-(S-cysteinyl)-8alpha-(pros-histidyl)-FAD (His-Cys)). N325 and N496 each carry an N-linked (GlcNAc...) asparagine glycan.

It belongs to the oxygen-dependent FAD-linked oxidoreductase family. Requires FAD as cofactor. Post-translationally, the FAD cofactor is bound via a bicovalent 6-S-cysteinyl, 8alpha-N1-histidyl FAD linkage.

Its subcellular location is the secreted. The protein resides in the cell wall. This chain is Berberine bridge enzyme-like 16, found in Arabidopsis thaliana (Mouse-ear cress).